Here is a 245-residue protein sequence, read N- to C-terminus: Uroporphyrinogen-III C-methyltransferase (245 aa).

Residues Pro12, 87 to 89 (GGD), 117 to 118 (TA), Met168, Ala197, and Ala225 each bind S-adenosyl-L-homocysteine.

The protein belongs to the precorrin methyltransferase family.

It catalyses the reaction uroporphyrinogen III + 2 S-adenosyl-L-methionine = precorrin-2 + 2 S-adenosyl-L-homocysteine + H(+). Its pathway is cofactor biosynthesis; adenosylcobalamin biosynthesis; precorrin-2 from uroporphyrinogen III: step 1/1. The protein operates within porphyrin-containing compound metabolism; siroheme biosynthesis; precorrin-2 from uroporphyrinogen III: step 1/1. Functionally, catalyzes the two successive C-2 and C-7 methylation reactions involved in the conversion of uroporphyrinogen III to precorrin-2 via the intermediate formation of precorrin-1. It is a step in the biosynthesis of both cobalamin (vitamin B12) and siroheme. The protein is Uroporphyrinogen-III C-methyltransferase (cobA) of Pseudomonas aeruginosa (strain ATCC 15692 / DSM 22644 / CIP 104116 / JCM 14847 / LMG 12228 / 1C / PRS 101 / PAO1).